Reading from the N-terminus, the 1588-residue chain is Autotransporter adhesin EhaG (1588 aa).

The N-terminal stretch at methionine 1 to alanine 53 is a signal peptide. The interval asparagine 54–arginine 1499 is surface exposed passenger domain. Residues methionine 1500–tryptophan 1588 form a translocator domain region. 4 beta stranded membrane passes run glycine 1534–threonine 1544, glutamate 1548–valine 1558, lysine 1567–asparagine 1573, and glutamate 1577–tryptophan 1588.

It belongs to the autotransporter-2 (AT-2) (TC 1.B.40) family. As to quaternary structure, homotrimer.

Its subcellular location is the cell surface. It localises to the cell outer membrane. Its function is as follows. Mediates aggregation, biofilm formation and adhesion to a range of extracellular matrix (ECM) proteins, such as fibronectin, fibrinogen, laminin and collagen types I, II, III, and V. Mediates adhesion to intestinal epithelial cells. The sequence is that of Autotransporter adhesin EhaG from Escherichia coli O157:H7.